The following is a 186-amino-acid chain: Casparian strip membrane protein 1 (186 aa).

Over 1–26 the chain is Cytoplasmic; sequence MKGGSIELGEVSKNASTNKGVKRGLS. A helical membrane pass occupies residues 27–47; that stretch reads IMDFILRIIAGVATLASAVAM. The Extracellular segment spans residues 48–72; sequence GTTDERLPFATSFVQFRAEYDDLPS. Residues 73–93 form a helical membrane-spanning segment; the sequence is FVFFVLANSIVCGYLALSLIL. Residues 94–107 lie on the Cytoplasmic side of the membrane; sequence SILHIVRSTAVKSR. Residues 108-128 form a helical membrane-spanning segment; that stretch reads ILLIVLDMVMMGLLAAAASAA. Topologically, residues 129 to 157 are extracellular; that stretch reads ASIVYIAHYGNTQANWFPICQQYNSFCER. A helical membrane pass occupies residues 158–178; it reads ISGSLIGSYIAVALFIIIILL. The Cytoplasmic segment spans residues 179–186; sequence SQSAISRN.

It belongs to the Casparian strip membrane proteins (CASP) family. Homodimer and heterodimers.

Its subcellular location is the cell membrane. In terms of biological role, regulates membrane-cell wall junctions and localized cell wall deposition. Required for establishment of the Casparian strip membrane domain (CSD) and the subsequent formation of Casparian strips, a cell wall modification of the root endodermis that determines an apoplastic barrier between the intraorganismal apoplasm and the extraorganismal apoplasm and prevents lateral diffusion. The chain is Casparian strip membrane protein 1 from Medicago truncatula (Barrel medic).